The sequence spans 435 residues: Arginine biosynthesis bifunctional protein ArgJ, mitochondrial (435 aa).

Positions 179, 205, 216, 302, 430, and 435 each coordinate substrate. The active-site Nucleophile is the Thr-216.

This sequence belongs to the ArgJ family. As to quaternary structure, heterodimer of an alpha and a beta chain. Post-translationally, the alpha and beta chains are autoproteolytically processed from a single precursor protein within the mitochondrion.

The protein resides in the mitochondrion matrix. The catalysed reaction is N(2)-acetyl-L-ornithine + L-glutamate = N-acetyl-L-glutamate + L-ornithine. It carries out the reaction L-glutamate + acetyl-CoA = N-acetyl-L-glutamate + CoA + H(+). The protein operates within amino-acid biosynthesis; L-arginine biosynthesis; L-ornithine and N-acetyl-L-glutamate from L-glutamate and N(2)-acetyl-L-ornithine (cyclic): step 1/1. Its pathway is amino-acid biosynthesis; L-arginine biosynthesis; N(2)-acetyl-L-ornithine from L-glutamate: step 1/4. Catalyzes two activities which are involved in the cyclic version of arginine biosynthesis: the synthesis of acetylglutamate from glutamate and acetyl-CoA, and of ornithine by transacetylation between acetylornithine and glutamate. The sequence is that of Arginine biosynthesis bifunctional protein ArgJ, mitochondrial from Schizosaccharomyces japonicus (strain yFS275 / FY16936) (Fission yeast).